A 190-amino-acid polypeptide reads, in one-letter code: Small ribosomal subunit protein uS7 (190 aa).

Residue Thr-2 is modified to N-acetylthreonine.

The protein belongs to the universal ribosomal protein uS7 family. As to quaternary structure, component of the small ribosomal subunit. Part of the small subunit (SSU) processome, composed of more than 70 proteins and the RNA chaperone small nucleolar RNA (snoRNA) U3.

It localises to the cytoplasm. The protein resides in the nucleus. The protein localises to the nucleolus. In terms of biological role, component of the small ribosomal subunit. The ribosome is a large ribonucleoprotein complex responsible for the synthesis of proteins in the cell. Part of the small subunit (SSU) processome, first precursor of the small eukaryotic ribosomal subunit. During the assembly of the SSU processome in the nucleolus, many ribosome biogenesis factors, an RNA chaperone and ribosomal proteins associate with the nascent pre-rRNA and work in concert to generate RNA folding, modifications, rearrangements and cleavage as well as targeted degradation of pre-ribosomal RNA by the RNA exosome. The protein is Small ribosomal subunit protein uS7 (rps5) of Dictyostelium discoideum (Social amoeba).